Consider the following 918-residue polypeptide: Calcium-transporting ATPase type 2C member 1 (918 aa).

Residues M1–Q78 are Cytoplasmic-facing. The chain crosses the membrane as a helical span at residues F79 to I95. Residues L96 to Q99 are Extracellular-facing. The chain crosses the membrane as a helical span at residues F100–E121. The Cytoplasmic portion of the chain corresponds to Y122–D262. Residues L263–V282 traverse the membrane as a helical segment. Topologically, residues G283–F294 are extracellular. A helical transmembrane segment spans residues T295–T316. Residues L317 to K699 lie on the Cytoplasmic side of the membrane. The active-site 4-aspartylphosphate intermediate is D349. Mg(2+) contacts are provided by D643 and D647. A helical transmembrane segment spans residues N700 to M722. Over N723–P727 the chain is Extracellular. A helical transmembrane segment spans residues L728–E751. Residues P752–I775 lie on the Cytoplasmic side of the membrane. Residues L776–W794 traverse the membrane as a helical segment. Topologically, residues R795–V801 are extracellular. Residues I802–S827 form a helical membrane-spanning segment. The Cytoplasmic segment spans residues Q828–M842. Residues F843–P862 form a helical membrane-spanning segment. At L863 to L875 the chain is on the extracellular side. The helical transmembrane segment at D876–E892 threads the bilayer. The Cytoplasmic portion of the chain corresponds to I893–V918.

This sequence belongs to the cation transport ATPase (P-type) (TC 3.A.3) family. Type IIA subfamily. Monomer. Homodimer. As to expression, expressed in hippocampal neurons in the CA3 region of the Amon's horn (at protein level). Expressed in brain, heart, lung, stomach, liver, colon and mammary gland.

It is found in the golgi apparatus. It localises to the trans-Golgi network membrane. Its subcellular location is the golgi stack membrane. The enzyme catalyses Ca(2+)(in) + ATP + H2O = Ca(2+)(out) + ADP + phosphate + H(+). The catalysed reaction is Mn(2+)(in) + ATP + H2O = Mn(2+)(out) + ADP + phosphate + H(+). In terms of biological role, ATP-driven pump that supplies the Golgi apparatus with Ca(2+) and Mn(2+) ions, both essential cofactors for processing and trafficking of newly synthesized proteins in the secretory pathway. Within a catalytic cycle, acquires Ca(2+) or Mn(2+) ions on the cytoplasmic side of the membrane and delivers them to the lumenal side. The transfer of ions across the membrane is coupled to ATP hydrolysis and is associated with a transient phosphorylation that shifts the pump conformation from inward-facing to outward-facing state. Plays a primary role in the maintenance of Ca(2+) homeostasis in the trans-Golgi compartment with a functional impact on Golgi and post-Golgi protein sorting as well as a structural impact on cisternae morphology. Responsible for loading the Golgi stores with Ca(2+) ions in keratinocytes, contributing to keratinocyte differentiation and epidermis integrity. Participates in Ca(2+) and Mn(2+) ions uptake into the Golgi store of hippocampal neurons and regulates protein trafficking required for neural polarity. May also play a role in the maintenance of Ca(2+) and Mn(2+) homeostasis and signaling in the cytosol while preventing cytotoxicity. This Mus musculus (Mouse) protein is Calcium-transporting ATPase type 2C member 1.